A 581-amino-acid polypeptide reads, in one-letter code: Chaperonin GroEL 1 (581 aa).

Residues 29 to 32 (TIGP), 86 to 90 (DGTTT), Gly-413, and Asp-492 contribute to the ATP site.

The protein belongs to the chaperonin (HSP60) family. In terms of assembly, forms a cylinder of 14 subunits composed of two heptameric rings stacked back-to-back. Interacts with the co-chaperonin GroES.

Its subcellular location is the cytoplasm. The catalysed reaction is ATP + H2O + a folded polypeptide = ADP + phosphate + an unfolded polypeptide.. In terms of biological role, together with its co-chaperonin GroES, plays an essential role in assisting protein folding. The GroEL-GroES system forms a nano-cage that allows encapsulation of the non-native substrate proteins and provides a physical environment optimized to promote and accelerate protein folding. The chain is Chaperonin GroEL 1 from Prochlorococcus marinus subsp. pastoris (strain CCMP1986 / NIES-2087 / MED4).